Here is a 403-residue protein sequence, read N- to C-terminus: Phosphopentomutase (403 aa).

6 residues coordinate Mn(2+): aspartate 13, aspartate 298, histidine 303, aspartate 339, histidine 340, and histidine 351.

Belongs to the phosphopentomutase family. Mn(2+) is required as a cofactor.

It is found in the cytoplasm. It catalyses the reaction 2-deoxy-alpha-D-ribose 1-phosphate = 2-deoxy-D-ribose 5-phosphate. The catalysed reaction is alpha-D-ribose 1-phosphate = D-ribose 5-phosphate. Its pathway is carbohydrate degradation; 2-deoxy-D-ribose 1-phosphate degradation; D-glyceraldehyde 3-phosphate and acetaldehyde from 2-deoxy-alpha-D-ribose 1-phosphate: step 1/2. In terms of biological role, isomerase that catalyzes the conversion of deoxy-ribose 1-phosphate (dRib-1-P) and ribose 1-phosphate (Rib-1-P) to deoxy-ribose 5-phosphate (dRib-5-P) and ribose 5-phosphate (Rib-5-P), respectively. This Streptococcus pneumoniae serotype 19F (strain G54) protein is Phosphopentomutase.